The primary structure comprises 210 residues: Uridine kinase (210 aa).

12 to 19 is an ATP binding site; the sequence is GGSGSGKT.

It belongs to the uridine kinase family.

The protein resides in the cytoplasm. The catalysed reaction is uridine + ATP = UMP + ADP + H(+). The enzyme catalyses cytidine + ATP = CMP + ADP + H(+). The protein operates within pyrimidine metabolism; CTP biosynthesis via salvage pathway; CTP from cytidine: step 1/3. It participates in pyrimidine metabolism; UMP biosynthesis via salvage pathway; UMP from uridine: step 1/1. The protein is Uridine kinase of Leuconostoc citreum (strain KM20).